Reading from the N-terminus, the 269-residue chain is Shikimate dehydrogenase (NADP(+)) (269 aa).

Shikimate is bound by residues 14–16 (SKS) and threonine 61. Lysine 65 (proton acceptor) is an active-site residue. Glutamate 77 serves as a coordination point for NADP(+). Shikimate-binding residues include asparagine 86 and aspartate 102. NADP(+) is bound by residues 126 to 130 (GAGGA), 149 to 154 (NRTLSK), and methionine 213. Tyrosine 215 provides a ligand contact to shikimate. Glycine 238 contributes to the NADP(+) binding site.

This sequence belongs to the shikimate dehydrogenase family. As to quaternary structure, homodimer.

The catalysed reaction is shikimate + NADP(+) = 3-dehydroshikimate + NADPH + H(+). It participates in metabolic intermediate biosynthesis; chorismate biosynthesis; chorismate from D-erythrose 4-phosphate and phosphoenolpyruvate: step 4/7. Functionally, involved in the biosynthesis of the chorismate, which leads to the biosynthesis of aromatic amino acids. Catalyzes the reversible NADPH linked reduction of 3-dehydroshikimate (DHSA) to yield shikimate (SA). The polypeptide is Shikimate dehydrogenase (NADP(+)) (Pasteurella multocida (strain Pm70)).